Consider the following 101-residue polypeptide: uncharacterized protein (101 aa).

A run of 3 helical transmembrane segments spans residues 10-32 (FLPN…FFLY), 45-67 (LGIW…LPLI), and 77-99 (IAFT…ILSH).

It is found in the cell membrane. This is an uncharacterized protein from Bacillus subtilis (strain 168).